The chain runs to 159 residues: Probable epoxidase scpX (159 aa).

The N-terminal stretch at M1 to D25 is a signal peptide. 2 helical membrane-spanning segments follow: residues W59–S79 and L96–I116. N-linked (GlcNAc...) asparagine glycosylation is found at N124 and N136. A helical membrane pass occupies residues R139 to L159.

The protein belongs to the epoxidase xenD family.

The protein localises to the membrane. The protein operates within mycotoxin biosynthesis. Functionally, probable epoxidase; part of the gene scp cluster that mediates the biosynthesis of a hirsutellone-like compound that has still to be identified. In Mollisia scopiformis (Conifer needle endophyte fungus), this protein is Probable epoxidase scpX.